We begin with the raw amino-acid sequence, 147 residues long: MAPKAEKKPAEKKPAEEKKAVAEKAPAEKKPKAGKKLPKEGGAAAGDKKKKRVKKSVETYKIYIFKVLKQVHPDIGISSKAMGIMNSFINDIFEKLAQEASRLARYNKKPTITSREIQTAVRLVLPGELAKHAVSEGTKAVTKFTSS.

Residues 1–31 (MAPKAEKKPAEKKPAEEKKAVAEKAPAEKKP) show a composition bias toward basic and acidic residues. The segment at 1–55 (MAPKAEKKPAEKKPAEEKKAVAEKAPAEKKPKAGKKLPKEGGAAAGDKKKKRVKK) is disordered. 3 positions are modified to N6-acetyllysine: Lys7, Lys35, and Lys36. Lys143 is covalently cross-linked (Glycyl lysine isopeptide (Lys-Gly) (interchain with G-Cter in ubiquitin)).

This sequence belongs to the histone H2B family. The nucleosome is a histone octamer containing two molecules each of H2A, H2B, H3 and H4 assembled in one H3-H4 heterotetramer and two H2A-H2B heterodimers. The octamer wraps approximately 147 bp of DNA. Can be acetylated to form H2BK6ac, H2BK33ac and H2BK34ac. Post-translationally, monoubiquitinated to form H2BK143ub1; may give a specific tag for epigenetic transcriptional activation.

It localises to the nucleus. It is found in the chromosome. In terms of biological role, core component of nucleosome. Nucleosomes wrap and compact DNA into chromatin, limiting DNA accessibility to the cellular machineries which require DNA as a template. Histones thereby play a central role in transcription regulation, DNA repair, DNA replication and chromosomal stability. DNA accessibility is regulated via a complex set of post-translational modifications of histones, also called histone code, and nucleosome remodeling. The sequence is that of Histone H2B (HIS2B) from Gossypium hirsutum (Upland cotton).